A 326-amino-acid chain; its full sequence is Probable oxidoreductase patJ (326 aa).

The segment at 287–326 (HGVQPGSVNGSNGHSTGVESKLEQLGSRAQRRVVIDDAGK) is disordered. Positions 292-304 (GSVNGSNGHSTGV) are enriched in polar residues.

Belongs to the oxidoreductase OpS7 family.

It is found in the vacuole lumen. Its subcellular location is the cytoplasmic vesicle lumen. It participates in mycotoxin biosynthesis; patulin biosynthesis. Probable oxidoreductase; part of the gene cluster that mediates the biosynthesis of patulin, an acetate-derived tetraketide mycotoxin produced by several fungal species that shows antimicrobial properties against several bacteria. PatJ acts with patO in the vacuole to convert gentisyl alcohol to isoepoxydon. The pathway begins with the synthesis of 6-methylsalicylic acid by the polyketide synthase (PKS) patK via condensation of acetate and malonate units. The 6-methylsalicylic acid decarboxylase patG then catalyzes the decarboxylation of 6-methylsalicylic acid to yield m-cresol (also known as 3-methylphenol). These first reactions occur in the cytosol. The intermediate m-cresol is then transported into the endoplasmic reticulum where the cytochrome P450 monooxygenase patH converts it to m-hydroxybenzyl alcohol, which is further converted to gentisyl alcohol by the cytochrome P450 monooxygenase patI. The oxidoreductases patJ and patO further convert gentisyl alcohol to isoepoxydon in the vacuole. PatN catalyzes then the transformation of isoepoxydon into phyllostine. The cluster protein patF is responsible for the conversion from phyllostine to neopatulin whereas the alcohol dehydrogenase patD converts neopatulin to E-ascladiol. The steps between isoepoxydon and E-ascladiol occur in the cytosol, and E-ascladiol is probably secreted to the extracellular space by one of the cluster-specific transporters patC or patM. Finally, the secreted patulin synthase patE catalyzes the conversion of E-ascladiol to patulin. The protein is Probable oxidoreductase patJ of Penicillium expansum (Blue mold rot fungus).